The chain runs to 1462 residues: uncharacterized protein (1462 aa).

Residues 119–139 form a helical membrane-spanning segment; that stretch reads TGYITSLCLSAILKFFSFRII. S411 and S420 each carry phosphoserine. The 190-residue stretch at 541-730 folds into the SEC7 domain; that stretch reads TLIESKKRKA…SEIYKAIKEN (190 aa). Residues 1102–1139 form an HEAT repeat; that stretch reads ENSEDWGLFSKLCNLLNDKNIVVRNQSLSLFHQLVNKY.

The protein resides in the cytoplasm. It is found in the golgi apparatus membrane. This is an uncharacterized protein from Schizosaccharomyces pombe (strain 972 / ATCC 24843) (Fission yeast).